The sequence spans 657 residues: Leishmanolysin (657 aa).

Positions 1–41 (MSVDSSSSSTHRRRCVAARLVRLAAAGAAVTVAVGTAAAWA) are cleaved as a signal peptide. Residues 42 to 102 (HAGALQHRCI…DPRPGSAPTV (61 aa)) constitute a propeptide, activation peptide. The Extracellular portion of the chain corresponds to 44–611 (GALQHRCIHD…DRMVGLATAA (568 aa)). Asparagine 107 carries an N-linked (GlcNAc...) asparagine glycan. 2 cysteine pairs are disulfide-bonded: cysteine 127–cysteine 144 and cysteine 193–cysteine 232. Position 266 (histidine 266) interacts with Zn(2+). Residue glutamate 267 is part of the active site. Position 270 (histidine 270) interacts with Zn(2+). An N-linked (GlcNAc...) asparagine glycan is attached at asparagine 302. 7 disulfide bridges follow: cysteine 316-cysteine 388, cysteine 395-cysteine 458, cysteine 408-cysteine 427, cysteine 417-cysteine 492, cysteine 469-cysteine 513, cysteine 518-cysteine 568, and cysteine 538-cysteine 561. Histidine 336 lines the Zn(2+) pocket. Residues asparagine 399, asparagine 409, asparagine 445, asparagine 466, and asparagine 501 are each glycosylated (N-linked (GlcNAc...) asparagine). A helical membrane pass occupies residues 612 to 632 (TVLLGMVLSLMALVVVWLLLV). Topologically, residues 633–657 (SCPWWCCKLGGPPASVTPACSPETE) are cytoplasmic.

The protein belongs to the peptidase M8 family. Zn(2+) serves as cofactor.

It localises to the membrane. It carries out the reaction Preference for hydrophobic residues at P1 and P1' and basic residues at P2' and P3'. A model nonapeptide is cleaved at -Ala-Tyr-|-Leu-Lys-Lys-.. Has an integral role during the infection of macrophages in the mammalian host. This is Leishmanolysin (mspC) from Leishmania tropica.